The primary structure comprises 224 residues: UPF0111 protein CPn_0681/CP_0066/CPj0681/CpB0708 (224 aa).

This sequence belongs to the UPF0111 family.

The chain is UPF0111 protein CPn_0681/CP_0066/CPj0681/CpB0708 from Chlamydia pneumoniae (Chlamydophila pneumoniae).